We begin with the raw amino-acid sequence, 580 residues long: Long-chain-fatty-acid--AMP ligase FadD28 (580 aa).

Positions Ser-421–Pro-440 are disordered.

Belongs to the ATP-dependent AMP-binding enzyme family.

It carries out the reaction holo-[mycocerosate synthase] + a long-chain fatty acid + ATP = a long-chain fatty acyl-[mycocerosate synthase] + AMP + diphosphate. The catalysed reaction is a long-chain fatty acid + ATP + H(+) = a long-chain fatty acyl-AMP + diphosphate. It catalyses the reaction holo-[mycocerosate synthase] + a long-chain fatty acyl-AMP = a long-chain fatty acyl-[mycocerosate synthase] + AMP + H(+). It participates in lipid metabolism; fatty acid biosynthesis. Involved in the biosynthesis of phthiocerol dimycocerosate (PDIM), a cell wall-associated lipid found only in pathogenic mycobacteria. Catalyzes the activation of long-chain fatty acids as acyl-adenylates (acyl-AMP), which are then transferred to the multifunctional polyketide synthase Mas for further chain extension. The polypeptide is Long-chain-fatty-acid--AMP ligase FadD28 (fadD28) (Mycobacterium tuberculosis (strain CDC 1551 / Oshkosh)).